Consider the following 552-residue polypeptide: Alcohol dehydrogenase [acceptor] (552 aa).

3–32 (DYIIVGAGSAGCVLANRLSADPSKRVCLLE) is a binding site for FAD. Catalysis depends on His-469, which acts as the Proton acceptor.

Belongs to the GMC oxidoreductase family. It depends on FAD as a cofactor.

Its subcellular location is the cell inner membrane. It carries out the reaction a primary alcohol + A = an aldehyde + AH2. Its function is as follows. Converts aliphatic medium-chain-length alcohols into aldehydes. May be linked to the electron transfer chain. This chain is Alcohol dehydrogenase [acceptor] (alkJ), found in Pseudomonas putida (Arthrobacter siderocapsulatus).